Here is a 169-residue protein sequence, read N- to C-terminus: Cilia- and flagella-associated protein 68 (169 aa).

Mn stretches follow at residues 98–109 (TTYDTSYNNRRP) and 139–149 (KSTYMTSYSKP).

The protein belongs to the CFAP68 family. In terms of assembly, microtubule inner protein component of sperm flagellar doublet microtubules.

It is found in the cytoplasm. Its subcellular location is the cytoskeleton. The protein resides in the cilium axoneme. It localises to the flagellum axoneme. The protein localises to the nucleus. It is found in the cell projection. Its subcellular location is the cilium. Functionally, microtubule inner protein (MIP) part of the dynein-decorated doublet microtubules (DMTs) in cilia axoneme, which is required for motile cilia beating. The sequence is that of Cilia- and flagella-associated protein 68 (CFAP68) from Bos taurus (Bovine).